Here is a 727-residue protein sequence, read N- to C-terminus: Iron-sulfur clusters transporter ATM1, mitochondrial (727 aa).

The transit peptide at 1–25 (MLIGGAQNRLYQLRTSNILGLLRTR) directs the protein to the mitochondrion. The Mitochondrial matrix segment spans residues 26 to 138 (SALRVGSKVE…PRGNTKVKVR (113 aa)). A disordered region spans residues 87 to 107 (KSKLPNEDTAHNASEKNSKKT). Residues 90-107 (LPNEDTAHNASEKNSKKT) show a composition bias toward basic and acidic residues. Residues 139 to 160 (VLLALALLIGAKVLNVQVPFFF) traverse the membrane as a helical segment. In terms of domain architecture, ABC transmembrane type-1 spans 139–429 (VLLALALLIG…LGSVYRELKQ (291 aa)). Residues 161 to 183 (KQIIDGMNVDWSDATVALPAALG) lie on the Mitochondrial intermembrane side of the membrane. The helical transmembrane segment at 184–207 (LTIMCYGLARFGAVLFGELRNAIF) threads the bilayer. At 208-256 (ARVAQNAIRNVSLQTFEHLMKLDLGWHLSRQTGGLTRAMDRGTKGISYV) the chain is on the mitochondrial matrix side. Residues 257–280 (LSAMVFHIIPITFEISVVCGILTY) form a helical membrane-spanning segment. Q281 is a topological domain (mitochondrial intermembrane). Residues 282 to 302 (FGASFAGITFTTMLLYSIFTI) form a helical membrane-spanning segment. The Mitochondrial matrix portion of the chain corresponds to 303 to 368 (RTTAWRTRFR…SQVKVAQSLA (66 aa)). Glutathione-binding positions include 308–312 (RTRFR) and 371–374 (NSGQ). Residues 369–387 (FLNSGQSLIFTTALTGMMY) traverse the membrane as a helical segment. Topologically, residues 388–402 (MGCTGVIGGDLTVGD) are mitochondrial intermembrane. A helical transmembrane segment spans residues 403–424 (LVLINQLVFQLSVPLNFLGSVY). Residue G421 coordinates glutathione. At 425 to 727 (RELKQSLIDM…ETLEKLNKSI (303 aa)) the chain is on the mitochondrial matrix side. The ABC transporter domain maps to 465–701 (IKFENVTFGY…ENSLYKELWR (237 aa)). ATP-binding positions include Y474 and 498–509 (GPSGSGKSTVLK).

This sequence belongs to the ABC transporter superfamily. ABCB family. Heavy Metal importer (TC 3.A.1.210) subfamily. In terms of assembly, homodimer.

It localises to the mitochondrion inner membrane. Its function is as follows. Performs an essential function in the generation of cytoplasmic iron-sulfur proteins by mediating the ATP-dependent export of Fe/S cluster precursors synthesized by NFS1 and other mitochondrial proteins. Hydrolyzes ATP. Binds glutathione and may function by transporting a glutathione-conjugated iron-sulfur compound. The polypeptide is Iron-sulfur clusters transporter ATM1, mitochondrial (Candida glabrata (strain ATCC 2001 / BCRC 20586 / JCM 3761 / NBRC 0622 / NRRL Y-65 / CBS 138) (Yeast)).